The primary structure comprises 616 residues: Probable beta-hexosaminidase ARB_01353 (616 aa).

Positions 1 to 20 are cleaved as a signal peptide; sequence MRFAKALAITAVLLSGVVEA. The interval 96-117 is disordered; it reads KFDPFPDQSSKPKEKRQNAPPG. The N-linked (GlcNAc...) asparagine glycan is linked to Asn-333. The active-site Proton donor is the Glu-361.

Belongs to the glycosyl hydrolase 20 family.

The protein localises to the secreted. It carries out the reaction Hydrolysis of terminal non-reducing N-acetyl-D-hexosamine residues in N-acetyl-beta-D-hexosaminides.. Beta-hexosaminidase that shows a broad substrate specificity. The chain is Probable beta-hexosaminidase ARB_01353 from Arthroderma benhamiae (strain ATCC MYA-4681 / CBS 112371) (Trichophyton mentagrophytes).